The sequence spans 152 residues: Aspartate carbamoyltransferase regulatory chain (152 aa).

The Zn(2+) site is built by Cys-108, Cys-113, Cys-136, and Cys-139.

This sequence belongs to the PyrI family. Contains catalytic and regulatory chains. It depends on Zn(2+) as a cofactor.

Functionally, involved in allosteric regulation of aspartate carbamoyltransferase. The polypeptide is Aspartate carbamoyltransferase regulatory chain (Thermococcus kodakarensis (strain ATCC BAA-918 / JCM 12380 / KOD1) (Pyrococcus kodakaraensis (strain KOD1))).